The following is a 444-amino-acid chain: Na(+)/H(+) antiporter NhaA (444 aa).

Helical transmembrane passes span 27–47 (TTGLMLMLMTVVALLLANSPL), 72–92 (IHHWINDGLMAIFFFIIGLEI), 108–128 (MLPILAAIGGMALPALIYYAI), 136–156 (AGWGIPMATDIAFAISALVLL), 167–187 (FLVALAIVDDLGAVVVIALFY), 190–210 (EINMLPLLFAFISFLVLVSFN), 212–232 (FGIHAILPYFVVGFIMWLFML), 312–332 (HLPVSLVVIPLFALANAGVSI), 349–369 (VMAGLVFGKVFGIAGISYLAI), 385–405 (VFGVAFLGGIGFTMSIFIAEL), and 419–439 (IGILAASLFAGIFGFIWLRFI).

This sequence belongs to the NhaA Na(+)/H(+) (TC 2.A.33) antiporter family.

It localises to the cell inner membrane. The enzyme catalyses Na(+)(in) + 2 H(+)(out) = Na(+)(out) + 2 H(+)(in). In terms of biological role, na(+)/H(+) antiporter that extrudes sodium in exchange for external protons. In Sulfurimonas denitrificans (strain ATCC 33889 / DSM 1251) (Thiomicrospira denitrificans (strain ATCC 33889 / DSM 1251)), this protein is Na(+)/H(+) antiporter NhaA.